The chain runs to 714 residues: Fatty acid oxidation complex subunit alpha (714 aa).

The tract at residues 1-190 is enoyl-CoA hydratase; the sequence is MEMASAFTLN…KLGLVDDVVP (190 aa). Positions 306 to 714 are 3-hydroxyacyl-CoA dehydrogenase; sequence APLNSVGILG…FWKTTATDLQ (409 aa).

In the N-terminal section; belongs to the enoyl-CoA hydratase/isomerase family. It in the central section; belongs to the 3-hydroxyacyl-CoA dehydrogenase family. In terms of assembly, heterotetramer of two alpha chains (FadJ) and two beta chains (FadI).

It localises to the cytoplasm. The catalysed reaction is a (3S)-3-hydroxyacyl-CoA = a (2E)-enoyl-CoA + H2O. The enzyme catalyses a 4-saturated-(3S)-3-hydroxyacyl-CoA = a (3E)-enoyl-CoA + H2O. It catalyses the reaction a (3S)-3-hydroxyacyl-CoA + NAD(+) = a 3-oxoacyl-CoA + NADH + H(+). It carries out the reaction (3S)-3-hydroxybutanoyl-CoA = (3R)-3-hydroxybutanoyl-CoA. It participates in lipid metabolism; fatty acid beta-oxidation. In terms of biological role, catalyzes the formation of a hydroxyacyl-CoA by addition of water on enoyl-CoA. Also exhibits 3-hydroxyacyl-CoA epimerase and 3-hydroxyacyl-CoA dehydrogenase activities. In Escherichia coli O9:H4 (strain HS), this protein is Fatty acid oxidation complex subunit alpha.